We begin with the raw amino-acid sequence, 152 residues long: MTKPIAENRRARYDYFIEETMEAGLMLTGTEVKSLRVGRANIAESYASVEGRTIKLINADIPPYGHANRFNHEPRRHRTLLLHRKQIDKLIGAVQRDGRTLIPLKLYWNEKGLAKLEIGLAKGKKNHDKRETEAARDWQRDKARLMKGDRGD.

Residues 122–152 (KGKKNHDKRETEAARDWQRDKARLMKGDRGD) are disordered. A compositionally biased stretch (basic and acidic residues) spans 128-152 (DKRETEAARDWQRDKARLMKGDRGD).

Belongs to the SmpB family.

It is found in the cytoplasm. In terms of biological role, required for rescue of stalled ribosomes mediated by trans-translation. Binds to transfer-messenger RNA (tmRNA), required for stable association of tmRNA with ribosomes. tmRNA and SmpB together mimic tRNA shape, replacing the anticodon stem-loop with SmpB. tmRNA is encoded by the ssrA gene; the 2 termini fold to resemble tRNA(Ala) and it encodes a 'tag peptide', a short internal open reading frame. During trans-translation Ala-aminoacylated tmRNA acts like a tRNA, entering the A-site of stalled ribosomes, displacing the stalled mRNA. The ribosome then switches to translate the ORF on the tmRNA; the nascent peptide is terminated with the 'tag peptide' encoded by the tmRNA and targeted for degradation. The ribosome is freed to recommence translation, which seems to be the essential function of trans-translation. The protein is SsrA-binding protein of Caulobacter sp. (strain K31).